Reading from the N-terminus, the 111-residue chain is Gene 21 protein (111 aa).

The polypeptide is Gene 21 protein (21) (Mycobacterium phage D29 (Mycobacteriophage D29)).